The following is an 874-amino-acid chain: Valine--tRNA ligase (874 aa).

The 'HIGH' region motif lies at 42–52 (PNITGRIHIGH). A 'KMSKS' region motif is present at residues 522-526 (KMSKS). Lys525 provides a ligand contact to ATP. Residues 806–874 (DYIDIDTEKQ…KLQALLKEIS (69 aa)) are a coiled coil.

The protein belongs to the class-I aminoacyl-tRNA synthetase family. ValS type 1 subfamily. Monomer.

The protein localises to the cytoplasm. The catalysed reaction is tRNA(Val) + L-valine + ATP = L-valyl-tRNA(Val) + AMP + diphosphate. Functionally, catalyzes the attachment of valine to tRNA(Val). As ValRS can inadvertently accommodate and process structurally similar amino acids such as threonine, to avoid such errors, it has a 'posttransfer' editing activity that hydrolyzes mischarged Thr-tRNA(Val) in a tRNA-dependent manner. This is Valine--tRNA ligase from Petrotoga mobilis (strain DSM 10674 / SJ95).